Reading from the N-terminus, the 247-residue chain is Segregation and condensation protein A (247 aa).

Belongs to the ScpA family. In terms of assembly, component of a cohesin-like complex composed of ScpA, ScpB and the Smc homodimer, in which ScpA and ScpB bind to the head domain of Smc. The presence of the three proteins is required for the association of the complex with DNA.

It is found in the cytoplasm. Participates in chromosomal partition during cell division. May act via the formation of a condensin-like complex containing Smc and ScpB that pull DNA away from mid-cell into both cell halves. This chain is Segregation and condensation protein A, found in Bacillus cereus (strain 03BB102).